Reading from the N-terminus, the 1039-residue chain is DIS3-like exonuclease 1 (1039 aa).

One can recognise a CSD1 domain in the interval 221-309; the sequence is PEHLPLEILE…KGRNGALCEN (89 aa). The CSD2 domain occupies 359–425; that stretch reads VLVMPWDYRI…AEIATILVEN (67 aa). Residues 458–807 form the RNB domain; that stretch reads RLDLRKTHLV…VHRLLLAAVN (350 aa).

It belongs to the RNR ribonuclease family. As to quaternary structure, component of the RNA exosome complex. The cofactor is Mg(2+).

It localises to the cytoplasm. The enzyme catalyses Exonucleolytic cleavage in the 3'- to 5'-direction to yield nucleoside 5'-phosphates.. In terms of biological role, catalytic component of the RNA exosome complex which has 3'-&gt;5' exoribonuclease activity and participates in a multitude of cellular RNA processing and degradation events. In Xenopus tropicalis (Western clawed frog), this protein is DIS3-like exonuclease 1 (dis3l).